A 453-amino-acid polypeptide reads, in one-letter code: Armadillo repeat-containing X-linked protein 1 (453 aa).

Residues 1-6 lie on the Mitochondrial intermembrane side of the membrane; that stretch reads MGRTRE. Mitochondrion outer membrane (MOM)-targeting sequence regions lie at residues 1-6 and 26-36; these read MGRTRE and RLAWGRDENEK. Residues 7–29 form a helical; Signal-anchor membrane-spanning segment; that stretch reads AGCVAAGVVIGAGACYCVYRLAW. Residues 30–453 lie on the Cytoplasmic side of the membrane; it reads GRDENEKIWD…VKVLKVLTKL (424 aa). 2 disordered regions span residues 58–77 and 132–182; these read AKTN…SEVK and ISGN…RAPA. A compositionally biased stretch (basic residues) spans 167–177; the sequence is GKSKGKARSKS. 4 ARM repeats span residues 195–235, 237–276, 358–398, and 415–453; these read PYKI…NNAA, SFNQ…NLSV, PAMT…NIND, and SSLF…LTKL.

The protein belongs to the eutherian X-chromosome-specific Armcx family. Interacts with MIRO1. In terms of tissue distribution, expressed at high levels ovary, heart, testis, prostate, brain, spleen and colon. Expressed at very low levels in liver and thymus. Not expressed in peripheral blood leukocytes. Not or reduced expressed in lung, prostate, colon, pancreas and ovarian carcinomas.

The protein localises to the mitochondrion. The protein resides in the mitochondrion outer membrane. Its function is as follows. Regulates mitochondrial transport during axon regeneration. Increases the proportion of motile mitochondria by recruiting stationary mitochondria into the motile pool. Enhances mitochondria movement and neurite growth in both adult axons and embryonic neurons. Promotes neuronal survival and axon regeneration after nerve injury. May link mitochondria to the Trak1-kinesin motor complex via its interaction with MIRO1. The sequence is that of Armadillo repeat-containing X-linked protein 1 (ARMCX1) from Homo sapiens (Human).